Here is a 101-residue protein sequence, read N- to C-terminus: Small ribosomal subunit protein uS14 (101 aa).

It belongs to the universal ribosomal protein uS14 family. In terms of assembly, part of the 30S ribosomal subunit. Contacts proteins S3 and S10.

In terms of biological role, binds 16S rRNA, required for the assembly of 30S particles and may also be responsible for determining the conformation of the 16S rRNA at the A site. The chain is Small ribosomal subunit protein uS14 from Dechloromonas aromatica (strain RCB).